Here is a 349-residue protein sequence, read N- to C-terminus: Hydroxymethylglutaryl-CoA synthase (349 aa).

Positions 30 and 31 each coordinate (3S)-3-hydroxy-3-methylglutaryl-CoA. The Proton donor/acceptor role is filled by Glu-82. Cys-114 and Thr-155 together coordinate (3S)-3-hydroxy-3-methylglutaryl-CoA. Cys-114 serves as the catalytic Acyl-thioester intermediate. Arg-203 is a CoA binding site. Residues Thr-205 and His-238 each contribute to the (3S)-3-hydroxy-3-methylglutaryl-CoA site. His-238 (proton donor/acceptor) is an active-site residue. Lys-243 lines the CoA pocket. Residues Asn-270 and Ser-300 each contribute to the (3S)-3-hydroxy-3-methylglutaryl-CoA site.

It belongs to the thiolase-like superfamily. Archaeal HMG-CoA synthase family. In terms of assembly, interacts with acetoacetyl-CoA thiolase that catalyzes the precedent step in the pathway and with a DUF35 protein. The acetoacetyl-CoA thiolase/HMG-CoA synthase complex channels the intermediate via a fused CoA-binding site, which allows for efficient coupling of the endergonic thiolase reaction with the exergonic HMGCS reaction.

It catalyses the reaction acetoacetyl-CoA + acetyl-CoA + H2O = (3S)-3-hydroxy-3-methylglutaryl-CoA + CoA + H(+). It functions in the pathway metabolic intermediate biosynthesis; (R)-mevalonate biosynthesis; (R)-mevalonate from acetyl-CoA: step 2/3. Its function is as follows. Catalyzes the condensation of acetyl-CoA with acetoacetyl-CoA to form 3-hydroxy-3-methylglutaryl-CoA (HMG-CoA). Functions in the mevalonate (MVA) pathway leading to isopentenyl diphosphate (IPP), a key precursor for the biosynthesis of isoprenoid compounds that are building blocks of archaeal membrane lipids. This is Hydroxymethylglutaryl-CoA synthase from Methanococcus maripaludis (strain C7 / ATCC BAA-1331).